We begin with the raw amino-acid sequence, 670 residues long: Protein ACCELERATED CELL DEATH 6 (670 aa).

Topologically, residues 1 to 456 are cytoplasmic; it reads MDSSGADLDR…PNYIFHERWT (456 aa). The segment at 18–47 is disordered; sequence LVSHDQRKDFSHSGGVGTTSPTGDTEPVPK. 10 ANK repeats span residues 66 to 95, 100 to 129, 134 to 163, 182 to 211, 216 to 248, 260 to 290, 295 to 325, 329 to 358, 363 to 391, and 399 to 428; these read EMTP…PMER, TGDS…CLLF, SRQT…SALA, DGNT…DAPF, KGIS…NVDR, QGNK…SLMD, DGRT…GVYV, DGSF…ASKY, LGQN…DTKH, and DGNT…EILK. A helical transmembrane segment spans residues 457–477; sequence LALLLYAIHSSGFESVKSLTI. At 478 to 492 the chain is on the extracellular side; sequence QSVPLDPKKNRHYVN. A helical transmembrane segment spans residues 493–513; that stretch reads ALLVVAALVATVTFAAGFTIP. Over 514–537 the chain is Cytoplasmic; sequence GGYISDSKKPNLGRATLATNPTLF. Residues 538–558 form a helical membrane-spanning segment; sequence IFLLFDILAMQSSVATICTLI. Over 559 to 577 the chain is Extracellular; that stretch reads WAQLGDLALILKSLHVALP. The chain crosses the membrane as a helical span at residues 578–598; sequence LLLFSLLCMPVAFLFGVITAI. The Cytoplasmic segment spans residues 599 to 602; it reads AHVK. The chain crosses the membrane as a helical span at residues 603 to 623; that stretch reads WLLVTISIISGGFFLFAIFIL. Over 624 to 638 the chain is Extracellular; it reads GPHVMLQRSHLPPSS. Residues 639–659 form a helical membrane-spanning segment; sequence GIFLKTFMLTIDISELFVILI. Residues 660–670 lie on the Cytoplasmic side of the membrane; that stretch reads KACFGCVACSE.

As to quaternary structure, component of large complexes containing, at least, FLS2, HSP70 and ACD6 in endoplasmic reticulum, plasma membrane and soluble fraction. Associated with HSP70 proteins during endoplasmic reticulum-associated degradation (ERAD). Reduced complex levels upon benzothiazole (BTH) treatment. Post-translationally, ubiquitinated. In terms of tissue distribution, basal expression requires light and salicylic acid (SA).

It is found in the cell membrane. The protein localises to the endoplasmic reticulum membrane. Its function is as follows. Dose-dependent activator of the defense response against virulent pathogens, including bacteria, fungi and oomycetes, that acts in a positive feedback loop with the defense signal salicylic acid (SA). Regulates the salicylic acid (SA) signaling pathway leading to cell death and modulating cell fate (e.g. cell enlargement and/or cell division). In response to SA signaling, triggers the accumulation of FLS2 at the plasma membrane, thus priming defenses. Involved in SA-dependent freezing signaling and tolerance. The protein is Protein ACCELERATED CELL DEATH 6 of Arabidopsis thaliana (Mouse-ear cress).